We begin with the raw amino-acid sequence, 176 residues long: Inner membrane-spanning protein YciB (176 aa).

The next 5 membrane-spanning stretches (helical) occupy residues Phe3–Phe23, Thr49–His69, Lys72–Ala92, Lys118–Val138, and Phe149–Leu169.

Belongs to the YciB family.

The protein localises to the cell inner membrane. Its function is as follows. Plays a role in cell envelope biogenesis, maintenance of cell envelope integrity and membrane homeostasis. This Burkholderia thailandensis (strain ATCC 700388 / DSM 13276 / CCUG 48851 / CIP 106301 / E264) protein is Inner membrane-spanning protein YciB.